Here is a 450-residue protein sequence, read N- to C-terminus: MKMLVKQIYENAKELDKSKIKIKGWVVTSRGNKKIQFIELNDGSSVLHLQLVLKSEKMDLNDIHFKTGSSIKAEGILNYTPKAEQSVELIVDKISLLAQSDEDFPIQTKKTTLEFLRTIPHLRHRSNTIKAVMLVRSSISFFIHEYFQKNDFSLVAAPIITSNDGEGAGETFIVDSEDKEPFFGNNVKATLGVTGQLHAEAYALGLQKVYTFAPTFRAENSNTKKHAAEFWMVEPEVAFFTLKELIQMSEEMLKYVIKKVLEKRRDELVFLDTHIKPGLIQSLEDFLESNLEIIEYRKVIEILEKNKVFFEEQNIEFGMDLKTEHERFIAEKYAKGPVGVINYPKKLKAFYMYQNDDNETVAAFDLLVPGIGELVGGSQRENRYEKLEQRIQELNIDQKDIQWYLDLRKYGYSGSAGFGLGLERLVMYITGIDNIRDSIPFPRTPNNLKM.

The protein belongs to the class-II aminoacyl-tRNA synthetase family. As to quaternary structure, homodimer.

The protein localises to the cytoplasm. The enzyme catalyses tRNA(Asn) + L-asparagine + ATP = L-asparaginyl-tRNA(Asn) + AMP + diphosphate + H(+). The protein is Asparagine--tRNA ligase of Mycoplasmopsis pulmonis (strain UAB CTIP) (Mycoplasma pulmonis).